Reading from the N-terminus, the 476-residue chain is Exodeoxyribonuclease 7 large subunit (476 aa).

The protein belongs to the XseA family. Heterooligomer composed of large and small subunits.

It localises to the cytoplasm. It carries out the reaction Exonucleolytic cleavage in either 5'- to 3'- or 3'- to 5'-direction to yield nucleoside 5'-phosphates.. In terms of biological role, bidirectionally degrades single-stranded DNA into large acid-insoluble oligonucleotides, which are then degraded further into small acid-soluble oligonucleotides. The sequence is that of Exodeoxyribonuclease 7 large subunit from Bartonella tribocorum (strain CIP 105476 / IBS 506).